Here is a 309-residue protein sequence, read N- to C-terminus: Dihydroorotate dehydrogenase B (NAD(+)), catalytic subunit (309 aa).

FMN-binding positions include Ser-21 and 45–46 (KA). Substrate contacts are provided by residues Lys-45 and 69–73 (NAIGL). Residues Asn-99 and Asn-127 each coordinate FMN. Asn-127 provides a ligand contact to substrate. Cys-130 (nucleophile) is an active-site residue. Residues Lys-165 and Ile-191 each coordinate FMN. A substrate-binding site is contributed by 192-193 (NT). FMN is bound by residues Gly-217, 243 to 244 (GG), and 265 to 266 (GT).

It belongs to the dihydroorotate dehydrogenase family. Type 1 subfamily. As to quaternary structure, heterotetramer of 2 PyrK and 2 PyrD type B subunits. FMN serves as cofactor.

Its subcellular location is the cytoplasm. It catalyses the reaction (S)-dihydroorotate + NAD(+) = orotate + NADH + H(+). It functions in the pathway pyrimidine metabolism; UMP biosynthesis via de novo pathway; orotate from (S)-dihydroorotate (NAD(+) route): step 1/1. In terms of biological role, catalyzes the conversion of dihydroorotate to orotate with NAD(+) as electron acceptor. The protein is Dihydroorotate dehydrogenase B (NAD(+)), catalytic subunit (pyrD) of Bacillus cereus (strain ATCC 14579 / DSM 31 / CCUG 7414 / JCM 2152 / NBRC 15305 / NCIMB 9373 / NCTC 2599 / NRRL B-3711).